Here is a 231-residue protein sequence, read N- to C-terminus: NADH-ubiquinone oxidoreductase chain 4 (231 aa).

A run of 6 helical transmembrane segments spans residues proline 1–isoleucine 21, methionine 34–leucine 54, isoleucine 63–glycine 85, alanine 89–tyrosine 111, isoleucine 128–proline 148, and leucine 156–serine 176.

Belongs to the complex I subunit 4 family.

It localises to the mitochondrion membrane. It catalyses the reaction a ubiquinone + NADH + 5 H(+)(in) = a ubiquinol + NAD(+) + 4 H(+)(out). Core subunit of the mitochondrial membrane respiratory chain NADH dehydrogenase (Complex I) that is believed to belong to the minimal assembly required for catalysis. Complex I functions in the transfer of electrons from NADH to the respiratory chain. The immediate electron acceptor for the enzyme is believed to be ubiquinone. This Trimeresurus stejnegeri (Chinese green tree viper) protein is NADH-ubiquinone oxidoreductase chain 4 (MT-ND4).